Reading from the N-terminus, the 287-residue chain is ATP synthase gamma chain (287 aa).

Belongs to the ATPase gamma chain family. As to quaternary structure, F-type ATPases have 2 components, CF(1) - the catalytic core - and CF(0) - the membrane proton channel. CF(1) has five subunits: alpha(3), beta(3), gamma(1), delta(1), epsilon(1). CF(0) has three main subunits: a, b and c.

Its subcellular location is the cell inner membrane. Produces ATP from ADP in the presence of a proton gradient across the membrane. The gamma chain is believed to be important in regulating ATPase activity and the flow of protons through the CF(0) complex. The polypeptide is ATP synthase gamma chain (Baumannia cicadellinicola subsp. Homalodisca coagulata).